Consider the following 448-residue polypeptide: Histidine--tRNA ligase (448 aa).

Disordered regions lie at residues 1-20 (MAIK…SPKL) and 428-448 (AGQA…QEKA).

This sequence belongs to the class-II aminoacyl-tRNA synthetase family. In terms of assembly, homodimer.

Its subcellular location is the cytoplasm. It catalyses the reaction tRNA(His) + L-histidine + ATP = L-histidyl-tRNA(His) + AMP + diphosphate + H(+). The sequence is that of Histidine--tRNA ligase from Deinococcus deserti (strain DSM 17065 / CIP 109153 / LMG 22923 / VCD115).